Consider the following 879-residue polypeptide: MGMSEIAKAAQKDKAIGGADRDSHTPMMQQYLRIKAQHPDTLLFYRMGDFYELFFDDAEKAARLLDITLTTRGQSAGTPIRMAGVPFHAVEQYLARLVKLGESVVIAEQVGEPGATKGPMERAVSRIVTPGTLTDAALLDDRIDSLLLAATLHRGVLGLAWLNLANGDLRVMECPAEQLQAQFERLRPAEVLVPDGLALPLVESLSPVLRRLADWQFDAGNGERLLTAHFGTRDLAGFDAEGLPVALAAAAALFEYARSTQRQSLEHVTGLRVEREAEYLRLDAATRRNLELTETLRGEASPTLFSLLDSCITSMGSRWLRHALHHPLRDRGVAAQRHGAVGELAGSDAGAPADIGDARMLGAVRAALRGVADVDRITARIALRSARPRDLAALSDSLARLPQLHAALGTPQAPLLCDLLAAIAVPDNALDLLVRAVAAEPAAAVRDGGVIAPGFDAELDELRGIQSNCGEFLLALEVRERERSGIATLKVEFNKVHGFYIEVSHANTGKVPDDYRRRQTLKNAERYITPELKAFEDKALSAQERALAREKLLYEALLEALAAHIPALQRIARALACLDGLGAFAEAAVRHSYVCPQFSAQPGVDIIGGRHPVVERQVEDFISNNCRLAPTRRMLLITGPNMGGKSTFMRQVALIALLAHVGAFVPARSARLGPLDAIFTRIGASDDLASGRSTFMVEMTEASAILHGATEQSLVLMDEIGRGTSTFDGLALAFAIARHLLEKNRCLTLFATHYFELTRLNGDYPECANVHLDAVEHAHRIVFLHAVEDGPASQSYGIEVAALAGIPGSVVREAKRRLRALENREVGNGPQADLFAALPDREPATPSHPALTALAELDPDTLSPREALERLYALKRMTA.

Residue 639–646 coordinates ATP; sequence GPNMGGKS.

It belongs to the DNA mismatch repair MutS family.

Functionally, this protein is involved in the repair of mismatches in DNA. It is possible that it carries out the mismatch recognition step. This protein has a weak ATPase activity. The polypeptide is DNA mismatch repair protein MutS (Aromatoleum aromaticum (strain DSM 19018 / LMG 30748 / EbN1) (Azoarcus sp. (strain EbN1))).